A 154-amino-acid chain; its full sequence is Crossover junction endodeoxyribonuclease RuvC (154 aa).

Residues Asp7, Glu67, and Asp139 contribute to the active site. Residues Asp7, Glu67, and Asp139 each coordinate Mg(2+).

The protein belongs to the RuvC family. Homodimer which binds Holliday junction (HJ) DNA. The HJ becomes 2-fold symmetrical on binding to RuvC with unstacked arms; it has a different conformation from HJ DNA in complex with RuvA. In the full resolvosome a probable DNA-RuvA(4)-RuvB(12)-RuvC(2) complex forms which resolves the HJ. The cofactor is Mg(2+).

It localises to the cytoplasm. It carries out the reaction Endonucleolytic cleavage at a junction such as a reciprocal single-stranded crossover between two homologous DNA duplexes (Holliday junction).. The RuvA-RuvB-RuvC complex processes Holliday junction (HJ) DNA during genetic recombination and DNA repair. Endonuclease that resolves HJ intermediates. Cleaves cruciform DNA by making single-stranded nicks across the HJ at symmetrical positions within the homologous arms, yielding a 5'-phosphate and a 3'-hydroxyl group; requires a central core of homology in the junction. The consensus cleavage sequence is 5'-(A/T)TT(C/G)-3'. Cleavage occurs on the 3'-side of the TT dinucleotide at the point of strand exchange. HJ branch migration catalyzed by RuvA-RuvB allows RuvC to scan DNA until it finds its consensus sequence, where it cleaves and resolves the cruciform DNA. The sequence is that of Crossover junction endodeoxyribonuclease RuvC from Parasynechococcus marenigrum (strain WH8102).